Consider the following 161-residue polypeptide: GTP-dependent dephospho-CoA kinase (161 aa).

GTP-binding residues include aspartate 40, valine 41, valine 42, aspartate 59, and glutamate 112.

The protein belongs to the GTP-dependent DPCK family.

It catalyses the reaction 3'-dephospho-CoA + GTP = GDP + CoA + H(+). Its pathway is cofactor biosynthesis; coenzyme A biosynthesis. Catalyzes the GTP-dependent phosphorylation of the 3'-hydroxyl group of dephosphocoenzyme A to form coenzyme A (CoA). In Methanoculleus marisnigri (strain ATCC 35101 / DSM 1498 / JR1), this protein is GTP-dependent dephospho-CoA kinase.